A 306-amino-acid chain; its full sequence is Glutamyl-Q tRNA(Asp) synthetase (306 aa).

L-glutamate-binding positions include 29 to 33 (RFAPS) and Asp65. A 'HIGH' region motif is present at residues 32–42 (PSPTGPLHLGN). Zn(2+) contacts are provided by Cys121, Cys123, Tyr141, and Cys145. Positions 188 and 206 each coordinate L-glutamate. A 'KMSKS' region motif is present at residues 244–248 (KLAKR). Lys247 serves as a coordination point for ATP.

Belongs to the class-I aminoacyl-tRNA synthetase family. GluQ subfamily. Zn(2+) is required as a cofactor.

Catalyzes the tRNA-independent activation of glutamate in presence of ATP and the subsequent transfer of glutamate onto a tRNA(Asp). Glutamate is transferred on the 2-amino-5-(4,5-dihydroxy-2-cyclopenten-1-yl) moiety of the queuosine in the wobble position of the QUC anticodon. This is Glutamyl-Q tRNA(Asp) synthetase from Prochlorococcus marinus (strain MIT 9313).